The sequence spans 135 residues: uncharacterized protein (135 aa).

The protein belongs to the MG067/MG068/MG395 family.

This is an uncharacterized protein from Mycoplasma pneumoniae (strain ATCC 29342 / M129 / Subtype 1) (Mycoplasmoides pneumoniae).